The chain runs to 232 residues: Ashwin (232 aa).

Composition is skewed to basic and acidic residues over residues 64–97 (DLPKSRWGKMMEKKREQHEIKKETKRSSPADGLR) and 116–127 (KKTENGDNDRLR). The tract at residues 64–232 (DLPKSRWGKM…KRKIQHVTWP (169 aa)) is disordered. Polar residues predominate over residues 130 to 140 (PQASATSNTFR). At Ser143 the chain carries Phosphoserine. Low complexity predominate over residues 144 to 156 (DSSSSVSPLVLSS). Residues 163–179 (KMEHGNNDNKQNHDLTH) are compositionally biased toward basic and acidic residues. 3 positions are modified to phosphoserine: Ser182, Ser189, and Ser193. The residue at position 198 (Thr198) is a Phosphothreonine.

The protein belongs to the ashwin family. In terms of assembly, component of the tRNA-splicing ligase complex.

Its subcellular location is the nucleus. The protein is Ashwin of Bos taurus (Bovine).